A 157-amino-acid polypeptide reads, in one-letter code: Cell cycle control protein 50C (157 aa).

Topologically, residues 1–34 are cytoplasmic; sequence MEERAQHCLSRLLDNSALKQQELPIHRLYFTARR. A helical membrane pass occupies residues 35-55; the sequence is VLFVFFATGIFCLCMGIILIL. The Extracellular segment spans residues 56–157; sequence SARSTQEIEI…LFLNQVDFSV (102 aa). Asn-66 is a glycosylation site (N-linked (GlcNAc...) asparagine).

It belongs to the CDC50/LEM3 family.

It localises to the membrane. The sequence is that of Cell cycle control protein 50C (TMEM30C) from Pan troglodytes (Chimpanzee).